The following is a 182-amino-acid chain: Inner membrane-spanning protein YciB (182 aa).

5 consecutive transmembrane segments (helical) span residues 22–42 (IYIA…VTYA), 50–70 (MHLI…IFHD), 72–92 (AFIK…LAVS), 118–138 (VTWY…YVAF), and 148–168 (FKVF…VVYL).

Belongs to the YciB family.

The protein resides in the cell inner membrane. Its function is as follows. Plays a role in cell envelope biogenesis, maintenance of cell envelope integrity and membrane homeostasis. The polypeptide is Inner membrane-spanning protein YciB (Shewanella woodyi (strain ATCC 51908 / MS32)).